We begin with the raw amino-acid sequence, 95 residues long: Large ribosomal subunit protein uL23 (95 aa).

This sequence belongs to the universal ribosomal protein uL23 family. Part of the 50S ribosomal subunit. Contacts protein L29, and trigger factor when it is bound to the ribosome.

Functionally, one of the early assembly proteins it binds 23S rRNA. One of the proteins that surrounds the polypeptide exit tunnel on the outside of the ribosome. Forms the main docking site for trigger factor binding to the ribosome. This chain is Large ribosomal subunit protein uL23, found in Rubrobacter xylanophilus (strain DSM 9941 / JCM 11954 / NBRC 16129 / PRD-1).